A 23-amino-acid polypeptide reads, in one-letter code: MDKLAAGGLYLLFLLLAGIIVTH.

The chain is Putative gene 50 protein (50) from Bacillus subtilis (Bacteriophage SP01).